Here is a 141-residue protein sequence, read N- to C-terminus: Brain ribonuclease (141 aa).

The interval 1-25 (KETAAAKFRRQHMDSGSSSSSNSNY) is disordered. Substrate contacts are provided by Lys7 and Arg10. Catalysis depends on His12, which acts as the Proton acceptor. A compositionally biased stretch (low complexity) spans 15–24 (SGSSSSSNSN). Disulfide bonds link Cys26-Cys84, Cys40-Cys95, Cys58-Cys110, and Cys65-Cys72. Residue 41-45 (KPVNT) participates in substrate binding. The N-linked (GlcNAc...) asparagine glycan is linked to Asn62. Residues Lys66 and Arg85 each coordinate substrate. His119 functions as the Proton donor in the catalytic mechanism. Thr129 is a glycosylation site (O-linked (GalNAc...) threonine).

It belongs to the pancreatic ribonuclease family.

It is found in the secreted. This chain is Brain ribonuclease (BRN), found in Giraffa camelopardalis (Giraffe).